Consider the following 581-residue polypeptide: Sulfate adenylyltransferase (581 aa).

The segment at 1–176 is N-terminal; that stretch reads MANAPHGGVL…VQAIQAPTHF (176 aa). The segment at 177–401 is catalytic; it reads DYVPLRFTPA…LRESYPPRPQ (225 aa). Sulfate is bound at residue Gln-204. ATP-binding positions include 204–207 and 298–301; these read QTRN and GRDH. Catalysis depends on residues Thr-205, Arg-206, and Asn-207. Arg-206 is a sulfate binding site. Ala-302 is a sulfate binding site. Met-340 provides a ligand contact to ATP. Positions 402 to 581 are allosteric regulation domain; adenylyl-sulfate kinase-like; sequence QGFTILLTGL…IMILESQNLV (180 aa). 3'-phosphoadenylyl sulfate is bound by residues 441 to 444, 486 to 487, and Arg-526; these read EELR and TA.

In the N-terminal section; belongs to the sulfate adenylyltransferase family. The protein in the C-terminal section; belongs to the APS kinase family. Homohexamer. Dimer of trimers.

Its subcellular location is the cytoplasm. It catalyses the reaction sulfate + ATP + H(+) = adenosine 5'-phosphosulfate + diphosphate. The protein operates within sulfur metabolism; hydrogen sulfide biosynthesis; sulfite from sulfate: step 1/3. With respect to regulation, allosterically inhibited by 3'-phosphoadenosine 5'-phosphosulfate (PAPS). Its function is as follows. Catalyzes the first intracellular reaction of sulfate assimilation, forming adenosine-5'-phosphosulfate (APS) from inorganic sulfate and ATP. Plays an important role in sulfate activation as a component of the biosynthesis pathway of sulfur-containing amino acids. This Cryptococcus neoformans var. neoformans serotype D (strain B-3501A) (Filobasidiella neoformans) protein is Sulfate adenylyltransferase.